The primary structure comprises 203 residues: ER membrane protein complex subunit 8/9 homolog (203 aa).

The MPN domain maps to 4–140; that stretch reads YKVSERAYAK…IQVFNCPGDS (137 aa).

Belongs to the EMC8/EMC9 family. As to quaternary structure, component of the ER membrane protein complex (EMC).

It is found in the endoplasmic reticulum membrane. Functionally, part of the endoplasmic reticulum membrane protein complex (EMC) that enables the energy-independent insertion into endoplasmic reticulum membranes of newly synthesized multi-pass membrane proteins like rhodopsins. This Drosophila melanogaster (Fruit fly) protein is ER membrane protein complex subunit 8/9 homolog.